Here is a 243-residue protein sequence, read N- to C-terminus: Uridylate kinase (243 aa).

15 to 18 lines the ATP pocket; the sequence is KISG. Residue Gly-57 participates in UMP binding. Residues Gly-58 and Arg-62 each contribute to the ATP site. Residues Asp-77 and 138–145 each bind UMP; that span reads TGNPFFTT. Positions 165, 171, and 174 each coordinate ATP.

The protein belongs to the UMP kinase family. Homohexamer.

It is found in the cytoplasm. It carries out the reaction UMP + ATP = UDP + ADP. The protein operates within pyrimidine metabolism; CTP biosynthesis via de novo pathway; UDP from UMP (UMPK route): step 1/1. Inhibited by UTP. In terms of biological role, catalyzes the reversible phosphorylation of UMP to UDP. The protein is Uridylate kinase of Blochmanniella floridana.